Reading from the N-terminus, the 1117-residue chain is Mitochondrial protein cyt-4 (1117 aa).

The 356-residue stretch at 561 to 916 folds into the RNB domain; sequence RQDFYTSTVY…LVHWQIQAAL (356 aa). Residues 705-730 are disordered; sequence VVLEVGTPPSAEDEAPTRKMTKPDEL. The segment covering 719–730 has biased composition (basic and acidic residues); sequence APTRKMTKPDEL.

Belongs to the RNR ribonuclease family. As to quaternary structure, homodimer.

The protein resides in the mitochondrion. Its function is as follows. Required for RNA 5'- and 3'-end processing and splicing. May act on the RNA processing enzymes directly, or it may act on other regulatory molecules, which influence the activity or synthesis of these enzymes. This Neurospora crassa (strain ATCC 24698 / 74-OR23-1A / CBS 708.71 / DSM 1257 / FGSC 987) protein is Mitochondrial protein cyt-4 (cyt-4).